An 808-amino-acid polypeptide reads, in one-letter code: Probable inorganic carbon transporter subunit DabA (808 aa).

Residues Cys-334, Asp-336, His-494, and Cys-509 each coordinate Zn(2+).

Belongs to the inorganic carbon transporter (TC 9.A.2) DabA family. In terms of assembly, forms a complex with DabB. Zn(2+) serves as cofactor.

The protein resides in the cell inner membrane. In terms of biological role, part of an energy-coupled inorganic carbon pump. This is Probable inorganic carbon transporter subunit DabA from Allorhizobium ampelinum (strain ATCC BAA-846 / DSM 112012 / S4) (Agrobacterium vitis (strain S4)).